The primary structure comprises 108 residues: Large ribosomal subunit protein bL31B (108 aa).

Residues 85–108 (PKPETSVEEVLPKGKKKAPAKKKK) are disordered. Residues 97–108 (KGKKKAPAKKKK) are compositionally biased toward basic residues.

Belongs to the bacterial ribosomal protein bL31 family. Type B subfamily. Part of the 50S ribosomal subunit.

This is Large ribosomal subunit protein bL31B from Chlamydia muridarum (strain MoPn / Nigg).